The sequence spans 709 residues: Polyribonucleotide nucleotidyltransferase (709 aa).

Mg(2+) contacts are provided by aspartate 486 and aspartate 492. The KH domain occupies proline 553–isoleucine 612. Residues glycine 622–lysine 690 enclose the S1 motif domain. The interval lysine 690–asparagine 709 is disordered. The segment covering glutamate 691–threonine 702 has biased composition (low complexity).

Belongs to the polyribonucleotide nucleotidyltransferase family. As to quaternary structure, component of the RNA degradosome, which is a multiprotein complex involved in RNA processing and mRNA degradation. The cofactor is Mg(2+).

Its subcellular location is the cytoplasm. It catalyses the reaction RNA(n+1) + phosphate = RNA(n) + a ribonucleoside 5'-diphosphate. Functionally, involved in mRNA degradation. Catalyzes the phosphorolysis of single-stranded polyribonucleotides processively in the 3'- to 5'-direction. The sequence is that of Polyribonucleotide nucleotidyltransferase from Proteus mirabilis (strain HI4320).